A 119-amino-acid polypeptide reads, in one-letter code: Holo-[acyl-carrier-protein] synthase (119 aa).

The Mg(2+) site is built by Asp-8 and Glu-60.

Belongs to the P-Pant transferase superfamily. AcpS family. Mg(2+) is required as a cofactor.

It localises to the cytoplasm. The enzyme catalyses apo-[ACP] + CoA = holo-[ACP] + adenosine 3',5'-bisphosphate + H(+). In terms of biological role, transfers the 4'-phosphopantetheine moiety from coenzyme A to a Ser of acyl-carrier-protein. This Mycoplasma pneumoniae (strain ATCC 29342 / M129 / Subtype 1) (Mycoplasmoides pneumoniae) protein is Holo-[acyl-carrier-protein] synthase.